Reading from the N-terminus, the 326-residue chain is Tetraacyldisaccharide 4'-kinase (326 aa).

Residue 55 to 62 participates in ATP binding; that stretch reads TAGGNGKT.

The protein belongs to the LpxK family.

It carries out the reaction a lipid A disaccharide + ATP = a lipid IVA + ADP + H(+). It functions in the pathway glycolipid biosynthesis; lipid IV(A) biosynthesis; lipid IV(A) from (3R)-3-hydroxytetradecanoyl-[acyl-carrier-protein] and UDP-N-acetyl-alpha-D-glucosamine: step 6/6. Transfers the gamma-phosphate of ATP to the 4'-position of a tetraacyldisaccharide 1-phosphate intermediate (termed DS-1-P) to form tetraacyldisaccharide 1,4'-bis-phosphate (lipid IVA). The sequence is that of Tetraacyldisaccharide 4'-kinase from Serratia proteamaculans (strain 568).